The primary structure comprises 462 residues: Glycoprotein endo-alpha-1,2-mannosidase (462 aa).

The Cytoplasmic segment spans residues 1–8; the sequence is MAKFRRRT. A helical; Signal-anchor for type II membrane protein membrane pass occupies residues 9 to 29; that stretch reads CIILALFILFIFSLMMGLKML. The Lumenal segment spans residues 30–462; sequence RPNTATFGAP…YALDRQLPVS (433 aa). The segment at 60–462 is catalytic; it reads DFQKSDRINS…YALDRQLPVS (403 aa).

It belongs to the glycosyl hydrolase 99 family. In terms of processing, undergoes proteolytic cleavage in the C-terminal region. In terms of tissue distribution, highly expressed in the liver and kidney. Expressed at lower levels in muscle, pancreas, heart, placenta, lung and brain.

The protein resides in the golgi apparatus membrane. It catalyses the reaction N-{alpha-Glc-(1-&gt;3)-alpha-Man-(1-&gt;2)-alpha-Man-(1-&gt;2)-alpha-Man-(1-&gt;3)-[alpha-Man-(1-&gt;2)-alpha-Man-(1-&gt;3)-[alpha-Man-(1-&gt;2)-alpha-Man-(1-&gt;6)]-alpha-Man-(1-&gt;6)]-beta-Man-(1-&gt;4)-beta-GlcNAc-(1-&gt;4)-beta-GlcNAc}-L-asparaginyl-[protein] + H2O = alpha-D-glucosyl-(1-&gt;3)-D-mannopyranose + N(4)-{alpha-D-Man-(1-&gt;2)-alpha-D-Man-(1-&gt;3)-[alpha-D-Man-(1-&gt;2)-alpha-D-Man-(1-&gt;3)-[alpha-D-Man-(1-&gt;2)-alpha-D-Man-(1-&gt;6)]-alpha-D-Man-(1-&gt;6)]-beta-D-Man-(1-&gt;4)-beta-D-GlaNAc-(1-&gt;4)-beta-D-GlcNAc}-L-asparaginyl-[protein] (N-glucan mannose isomer 8A1,2,3B1,2). The chain is Glycoprotein endo-alpha-1,2-mannosidase (MANEA) from Homo sapiens (Human).